The chain runs to 449 residues: Histidinol dehydrogenase (449 aa).

Residues Y135, Q199, and N229 each contribute to the NAD(+) site. Substrate contacts are provided by T252, Q274, and H277. Residues Q274 and H277 each contribute to the Zn(2+) site. Catalysis depends on proton acceptor residues E343 and H344. Substrate-binding residues include H344, D377, E431, and H436. D377 serves as a coordination point for Zn(2+). H436 lines the Zn(2+) pocket.

This sequence belongs to the histidinol dehydrogenase family. It depends on Zn(2+) as a cofactor.

The enzyme catalyses L-histidinol + 2 NAD(+) + H2O = L-histidine + 2 NADH + 3 H(+). It participates in amino-acid biosynthesis; L-histidine biosynthesis; L-histidine from 5-phospho-alpha-D-ribose 1-diphosphate: step 9/9. Functionally, catalyzes the sequential NAD-dependent oxidations of L-histidinol to L-histidinaldehyde and then to L-histidine. In Corynebacterium diphtheriae (strain ATCC 700971 / NCTC 13129 / Biotype gravis), this protein is Histidinol dehydrogenase.